The chain runs to 102 residues: Citrate lyase acyl carrier protein (102 aa).

At serine 14 the chain carries O-(phosphoribosyl dephospho-coenzyme A)serine.

It belongs to the CitD family. As to quaternary structure, oligomer with a subunit composition of (alpha,beta,gamma)6.

It is found in the cytoplasm. Its function is as follows. Covalent carrier of the coenzyme of citrate lyase. This Serratia proteamaculans (strain 568) protein is Citrate lyase acyl carrier protein.